The following is a 586-amino-acid chain: Paxillin (586 aa).

N-acetylmethionine is present on methionine 1. The short motif at 3–15 (DLDALLADLESTT) is the LD motif 1 element. The segment at 13–138 (STTSHISKRP…PSPTVMSSSL (126 aa)) is disordered. Phosphotyrosine; by PTK6 is present on tyrosine 31. A compositionally biased stretch (pro residues) spans 45-54 (VPPPVPPPPS). Phosphoserine occurs at positions 83 and 85. Residues 86-98 (PIYSSSTKNSSAS) show a composition bias toward low complexity. Tyrosine 88 carries the phosphotyrosine modification. Residue serine 106 is modified to Phosphoserine. Residue tyrosine 118 is modified to Phosphotyrosine; by PTK6. Phosphoserine occurs at positions 119, 126, and 130. The segment covering 121–137 (PNKQKSAEPSPTVMSSS) has biased composition (polar residues). A Phosphothreonine modification is found at threonine 132. Phosphoserine is present on residues serine 137, serine 140, and serine 143. The LD motif 2 signature appears at 144-156 (ELDRLLLELNAVQ). A Phosphotyrosine modification is found at tyrosine 210. Residues 220 to 241 (GGKAGPLMKEKPKRNGGRGLED) form a disordered region. An LD motif 3 motif is present at residues 245-257 (SVESLLDELENSV). Serine 259 carries the phosphoserine modification. The interval 266–290 (VNQGEMSSPQRVTSSQQQTRISASS) is disordered. Residue serine 273 is modified to Phosphoserine; by CDK5. Phosphoserine is present on residues serine 279, serine 287, serine 290, serine 301, serine 317, serine 327, and serine 335. A required for binding to PARVA and ILK region spans residues 291–310 (ATRELDELMASLSDFKFMAQ). Positions 294-305 (ELDELMASLSDF) match the LD motif 4 motif. The interval 309–329 (AQGKTGSSSPPGGLSKPGSQL) is disordered. A compositionally biased stretch (low complexity) spans 310 to 329 (QGKTGSSSPPGGLSKPGSQL). An LD motif 5 motif is present at residues 328–340 (QLDSMLGSLQSDL). 3 consecutive LIM zinc-binding domains span residues 353–403 (CGAC…CEKD), 412–462 (CYYC…CRKD), and 471–521 (CGGC…CEVH). At serine 528 the chain carries Phosphoserine. An LIM zinc-binding 4 domain is found at 530–580 (CSGCQKPITGRCITAMAKKFHPEHFVCAFCLKQLNKGTFKEQNDKPYCQSC).

This sequence belongs to the paxillin family. In terms of assembly, interacts in vitro with VCL/vinculin as well as to the SH3 domain of SRC and, when tyrosine phosphorylated, to the SH2 domain of CRK. Interacts with GIT1. Interacts with NUDT16L1/SDOS. Interacts with PTK2/FAK1. Interacts with PTK2B/PYK2. Interacts with ASAP2. Interacts with unphosphorylated ITGA4. Interacts with RNF5. Interacts with PDCD10. Interacts with NEK3, the interaction is prolactin-dependent. Interacts with PTK6. Interacts with TGFB1I1. Interacts with SORBS1. Interacts with PARVB. Interacts (via LD motif 4) with PARVA/PARVIN. Interacts (via LD motif 4) with ILK. Interacts (via cytoplasmic domain) with CEACAM1; the interaction is phosphotyrosyl-dependent. Interacts with LIMA1; this complex stabilizes actin dynamics. Interacts with CD36 (via C-terminus). Interacts with TRIM15. Interacts with PAK4; PAK4 acts as a scaffold to suppport PAXI phosphorylation at Ser-301. In terms of processing, phosphorylated by MAPK1/ERK2. Phosphorylated on tyrosine residues during integrin-mediated cell adhesion, embryonic development, fibroblast transformation and following stimulation of cells by mitogens. Phosphorylation at Ser-273 by CDK5 reduces its interaction with PTK2/FAK1 in matrix-cell focal adhesions (MCFA) during oligodendrocytes (OLs) differentiation. Phosphorylation at Tyr-31 and Tyr-118 by PTK6 promote the activation of RAC1 via CRK/CrKII, thereby promoting migration and invasion. Phosphorylation at Ser-279 by SLK is required for PXN redistribution and cell motility. Phosphorylation at Ser-301 promotes focal adhesion disassembly during cell migration.

It is found in the cytoplasm. The protein localises to the cytoskeleton. It localises to the cell junction. The protein resides in the focal adhesion. Its subcellular location is the cell cortex. Its function is as follows. Cytoskeletal protein involved in actin-membrane attachment at sites of cell adhesion to the extracellular matrix (focal adhesion). Recruits other proteins such as TRIM15 to focal adhesion. This chain is Paxillin, found in Rattus norvegicus (Rat).